We begin with the raw amino-acid sequence, 358 residues long: DNA replication and repair protein RecF (358 aa).

Residue glycine 33–threonine 40 participates in ATP binding.

This sequence belongs to the RecF family.

It localises to the cytoplasm. In terms of biological role, the RecF protein is involved in DNA metabolism; it is required for DNA replication and normal SOS inducibility. RecF binds preferentially to single-stranded, linear DNA. It also seems to bind ATP. This chain is DNA replication and repair protein RecF, found in Deinococcus geothermalis (strain DSM 11300 / CIP 105573 / AG-3a).